The primary structure comprises 154 residues: UPF0178 protein GDI0551/Gdia_1457 (154 aa).

It belongs to the UPF0178 family.

This Gluconacetobacter diazotrophicus (strain ATCC 49037 / DSM 5601 / CCUG 37298 / CIP 103539 / LMG 7603 / PAl5) protein is UPF0178 protein GDI0551/Gdia_1457.